The sequence spans 333 residues: Anthranilate phosphoribosyltransferase (333 aa).

5-phospho-alpha-D-ribose 1-diphosphate-binding positions include Gly81, 84 to 85 (GD), Thr89, 91 to 94 (NIST), 109 to 117 (KHGNRSVSS), and Ser121. Position 81 (Gly81) interacts with anthranilate. A Mg(2+)-binding site is contributed by Ser93. Asn112 provides a ligand contact to anthranilate. Residue Arg167 participates in anthranilate binding. The Mg(2+) site is built by Asp225 and Glu226.

The protein belongs to the anthranilate phosphoribosyltransferase family. As to quaternary structure, homodimer. Mg(2+) is required as a cofactor.

The catalysed reaction is N-(5-phospho-beta-D-ribosyl)anthranilate + diphosphate = 5-phospho-alpha-D-ribose 1-diphosphate + anthranilate. Its pathway is amino-acid biosynthesis; L-tryptophan biosynthesis; L-tryptophan from chorismate: step 2/5. Its function is as follows. Catalyzes the transfer of the phosphoribosyl group of 5-phosphorylribose-1-pyrophosphate (PRPP) to anthranilate to yield N-(5'-phosphoribosyl)-anthranilate (PRA). The chain is Anthranilate phosphoribosyltransferase from Glaesserella parasuis serovar 5 (strain SH0165) (Haemophilus parasuis).